The primary structure comprises 290 residues: Bifunctional protein FolD 3 (290 aa).

NADP(+)-binding positions include 163–165 and I229; that span reads GHS.

This sequence belongs to the tetrahydrofolate dehydrogenase/cyclohydrolase family. In terms of assembly, homodimer.

The catalysed reaction is (6R)-5,10-methylene-5,6,7,8-tetrahydrofolate + NADP(+) = (6R)-5,10-methenyltetrahydrofolate + NADPH. It catalyses the reaction (6R)-5,10-methenyltetrahydrofolate + H2O = (6R)-10-formyltetrahydrofolate + H(+). It participates in one-carbon metabolism; tetrahydrofolate interconversion. Its function is as follows. Catalyzes the oxidation of 5,10-methylenetetrahydrofolate to 5,10-methenyltetrahydrofolate and then the hydrolysis of 5,10-methenyltetrahydrofolate to 10-formyltetrahydrofolate. The sequence is that of Bifunctional protein FolD 3 from Roseobacter denitrificans (strain ATCC 33942 / OCh 114) (Erythrobacter sp. (strain OCh 114)).